Reading from the N-terminus, the 242-residue chain is Probable transcriptional regulatory protein Bamb_2332 (242 aa).

Belongs to the TACO1 family.

The protein resides in the cytoplasm. In Burkholderia ambifaria (strain ATCC BAA-244 / DSM 16087 / CCUG 44356 / LMG 19182 / AMMD) (Burkholderia cepacia (strain AMMD)), this protein is Probable transcriptional regulatory protein Bamb_2332.